The primary structure comprises 539 residues: uncharacterized protein (539 aa).

2 disordered regions span residues 179–203 and 433–459; these read SDEL…HSHG and AQAS…HRDE. Acidic residues predominate over residues 182–192; sequence LLPDTGEDSDE. Positions 433-442 are enriched in low complexity; the sequence is AQASARAQAR. The span at 443–455 shows a compositional bias: basic residues; the sequence is AARRGRSAAKARG.

Belongs to the mycobacterial PPE family.

The protein localises to the secreted. This is an uncharacterized protein from Mycobacterium tuberculosis (strain CDC 1551 / Oshkosh).